Here is a 298-residue protein sequence, read N- to C-terminus: Mitochondrial nicotinamide adenine dinucleotide transporter SLC25A51 (298 aa).

Basic and acidic residues predominate over residues 1 to 11 (MMDSEAHEKRP). The segment at 1-21 (MMDSEAHEKRPPMLTSSNQDL) is disordered. Solcar repeat units follow at residues 28–108 (VGDM…LSRL), 117–201 (PEFA…IKES), and 214–297 (NDFI…LLKI). 6 helical membrane-spanning segments follow: residues 36–56 (CGYC…KILF), 85–105 (LPPL…YEDL), 119–139 (FATR…LTPF), 180–200 (ILFR…PIKE), 216–236 (FICG…INVV), and 269–290 (LFRG…INAT).

It belongs to the mitochondrial carrier (TC 2.A.29) family.

It is found in the mitochondrion inner membrane. It catalyses the reaction NAD(+)(in) = NAD(+)(out). Its function is as follows. Mitochondrial membrane carrier protein that mediates the import of NAD(+) into mitochondria. Mitochondrial NAD(+) is required for glycolysis and mitochondrial respiration. Compared to SLC25A52, SLC25A51-mediated transport is essential for the import of NAD(+) in mitochondria. The transport mechanism, uniport or antiport, its electrogenicity and substrate selectivity, remain to be elucidated. This Mus musculus (Mouse) protein is Mitochondrial nicotinamide adenine dinucleotide transporter SLC25A51.